The primary structure comprises 489 residues: Tandem C2 domains nuclear protein (489 aa).

A phosphoserine mark is found at Ser82, Ser155, Ser167, Ser173, and Ser210. Residues 189–214 are disordered; sequence DSFSSVPSSSSSRKNSQGSNRSLDTI. The span at 191-210 shows a compositional bias: low complexity; the sequence is FSSVPSSSSSRKNSQGSNRS. Phosphothreonine is present on residues Thr213 and Thr215. Ser217 is modified (phosphoserine). C2 domains follow at residues 222–341 and 343–470; these read DLGR…SLEI and APSK…NQWK. The Nuclear localization signal motif lies at 446–448; sequence RRK.

Its subcellular location is the nucleus. This Mus musculus (Mouse) protein is Tandem C2 domains nuclear protein (Tc2n).